The following is a 2626-amino-acid chain: Unconventional myosin-IXa (2626 aa).

One can recognise a Ras-associating domain in the interval 14–112 (NEHTLRIYPG…YRFLLREKNL (99 aa)). One can recognise a Myosin motor domain in the interval 146–1017 (KDFDDLCSLP…ERQHLQDLLH (872 aa)). A helical transmembrane segment spans residues 175-195 (IYTYVGSILIAINPFKFLPIY). ATP is bound at residue 239–246 (GESGSGKT). Ser755 bears the Phosphoserine mark. Residues 908-919 (QAEPYFVKCIRS) form an actin-binding region. 5 IQ domains span residues 1021–1041 (LRRI…QQFL), 1043–1072 (LRQA…EKDA), 1075–1104 (MASA…AAVI), 1116–1145 (RHRA…KIIL), and 1139–1168 (QRNK…ERLK). Residues 1022 to 1163 (RRIILLQRWF…RARQRYKALK (142 aa)) form a neck or regulatory domain region. The interval 1164-2589 (EERLKETKLE…LKNVKNSPQK (1426 aa)) is tail. Over residues 1221–1240 (RESSMDFSKESPDKQQERGR) the composition is skewed to basic and acidic residues. Residues 1221 to 1276 (RESSMDFSKESPDKQQERGRSQSGTDLQGDVIVRQRPKSLEDLHQKKVGRAKRESR) are disordered. A Phosphoserine modification is found at Ser1243. Phosphothreonine is present on Thr1245. Ser1259 carries the post-translational modification Phosphoserine. Positions 1265–1292 (QKKVGRAKRESRRMRELEQAIFSLELLK) form a coiled coil. Positions 1266–1276 (KKVGRAKRESR) are enriched in basic residues. Ser1300 and Ser1318 each carry phosphoserine. Over residues 1360–1375 (PSTFTNPKFDSQNNAL) the composition is skewed to polar residues. The segment at 1360 to 1397 (PSTFTNPKFDSQNNALSASSETSSTFSGKGASSDSEHL) is disordered. A compositionally biased stretch (low complexity) spans 1376 to 1386 (SASSETSSTFS). Residues 1493 to 1540 (TVLKKLEKLNIEKEKRQKQLQQQNEKEMMEQIRQQTDILEKERKAFKT) are a coiled coil. Disordered regions lie at residues 1562-1602 (VERP…PPKD), 1618-1673 (SRTV…SRPI), 1689-1726 (GNPQ…RMAR), 1765-1784 (SELG…SEMT), and 1872-1907 (QYHP…KRGV). Composition is skewed to basic and acidic residues over residues 1620–1632 (TVKE…RMGT) and 1659–1669 (HRSDDPSREGS). Positions 1716-1726 (PAHKKKARMAR) are enriched in basic residues. The span at 1772–1784 (SLGQASHSDSEMT) shows a compositional bias: polar residues. Residues 1887-1899 (CRKEFKENKEPSP) are compositionally biased toward basic and acidic residues. Position 2016 is a phosphoserine (Ser2016). The Phorbol-ester/DAG-type zinc-finger motif lies at 2067–2116 (GHMFKATQYSIPTYCEYCSSLIWIMDRASVCKLCKYACHKKCCLKTTAKC). In terms of domain architecture, Rho-GAP spans 2131–2319 (VELSRLTSED…LIVVEQMNKY (189 aa)). The interval 2365 to 2385 (SGKGRLHRGSHPNPSSPVIVR) is disordered. Ser2380 bears the Phosphoserine mark. Residues 2408 to 2444 (TDQQQAAMQQEEKVLTEQIENLQKEKEELTFEMLVLE) adopt a coiled-coil conformation. A disordered region spans residues 2449-2527 (DDEALESEAS…NTTSSHGTRK (79 aa)). Residues 2504 to 2522 (SLDSVSSSVSSCLSNTTSS) are compositionally biased toward low complexity. Phosphoserine is present on Ser2542. The interval 2552–2614 (PLGQAKSLED…TVDSDCSSTQ (63 aa)) is disordered.

This sequence belongs to the TRAFAC class myosin-kinesin ATPase superfamily. Myosin family. In terms of processing, phosphorylated by ALPK1 following monosodium urate monohydrate (MSU)-induced inflammation. Expressed at high levels in brain, followed by testis and spleen. Expressed at very low levels, in kidney. Detected abundantly in brain and testis and at lower levels in adrenal gland, kidney, lung and spleen (at protein level). In adrenal gland it is mostly found in the medulla but not in the cortex. In brain, it is found in the cerebellum and the CA2-CA3 regions of the hippocampus.

Its subcellular location is the membrane. It localises to the cytoplasm. It is found in the synapse. The protein resides in the cell projection. The protein localises to the growth cone. In terms of biological role, myosins are actin-based motor molecules with ATPase activity. Unconventional myosins serve in intracellular movements. Regulates Rho by stimulating it's GTPase activity in neurons. Required for the regulation of neurite branching and motor neuron axon guidance. The sequence is that of Unconventional myosin-IXa (Myo9a) from Rattus norvegicus (Rat).